The chain runs to 231 residues: Large ribosomal subunit protein uL1 (231 aa).

This sequence belongs to the universal ribosomal protein uL1 family. Part of the 50S ribosomal subunit.

Its function is as follows. Binds directly to 23S rRNA. The L1 stalk is quite mobile in the ribosome, and is involved in E site tRNA release. Functionally, protein L1 is also a translational repressor protein, it controls the translation of the L11 operon by binding to its mRNA. The sequence is that of Large ribosomal subunit protein uL1 from Pseudomonas aeruginosa (strain LESB58).